The sequence spans 216 residues: 2-phospho-L-lactate guanylyltransferase (216 aa).

It belongs to the CofC family. In terms of assembly, homodimer.

The catalysed reaction is (2S)-2-phospholactate + GTP + H(+) = (2S)-lactyl-2-diphospho-5'-guanosine + diphosphate. The protein operates within cofactor biosynthesis; coenzyme F420 biosynthesis. Guanylyltransferase that catalyzes the activation of (2S)-2-phospholactate (2-PL) as (2S)-lactyl-2-diphospho-5'-guanosine, via the condensation of 2-PL with GTP. It is involved in the biosynthesis of coenzyme F420, a hydride carrier cofactor. The protein is 2-phospho-L-lactate guanylyltransferase of Methanocaldococcus infernus (strain DSM 11812 / JCM 15783 / ME).